The following is a 372-amino-acid chain: Ciliary neurotrophic factor receptor subunit alpha (372 aa).

A signal peptide spans M1–A22. The Ig-like C2-type domain maps to P27–H104. C46 and C89 form a disulfide bridge. N-linked (GlcNAc...) asparagine glycosylation is found at N60, N70, N142, and N190. Fibronectin type-III domains follow at residues P108–D205 and P206–P306. Positions W290–S294 match the WSXWS motif motif. The segment at P301–L340 is disordered. The span at T311–L326 shows a compositional bias: low complexity. Residue S342 is the site of GPI-anchor amidated serine attachment. Residues G343 to I372 constitute a propeptide, removed in mature form.

This sequence belongs to the type I cytokine receptor family. Type 3 subfamily. As to quaternary structure, forms a heterotrimer with LIFR and IL6ST. Interacts with heterodimeric neurotropic cytokine composed of CLCF1/CLC and CRLF1/CLF-1. Either alone or in complex with the heterodimer CLCF1-CRLF1 interacts with SORL1; this interaction may promote internalization and lysosomal degradation. In terms of tissue distribution, expressed in retina, brain, spleen, lung, liver and kidney. In the retina it is highly expressed by photoreceptors, but also found in the RPE, inner nuclear layer and ganglion cells.

It is found in the cell membrane. Binds to CNTF. The alpha subunit provides the receptor specificity. This chain is Ciliary neurotrophic factor receptor subunit alpha (CNTFR), found in Canis lupus familiaris (Dog).